Here is a 138-residue protein sequence, read N- to C-terminus: Phosphoribosyl-AMP cyclohydrolase (138 aa).

Asp-84 serves as a coordination point for Mg(2+). Cys-85 contacts Zn(2+). Mg(2+) is bound by residues Asp-86 and Asp-88. Zn(2+) contacts are provided by Cys-102 and Cys-109.

It belongs to the PRA-CH family. Homodimer. The cofactor is Mg(2+). Zn(2+) serves as cofactor.

It localises to the cytoplasm. The catalysed reaction is 1-(5-phospho-beta-D-ribosyl)-5'-AMP + H2O = 1-(5-phospho-beta-D-ribosyl)-5-[(5-phospho-beta-D-ribosylamino)methylideneamino]imidazole-4-carboxamide. Its pathway is amino-acid biosynthesis; L-histidine biosynthesis; L-histidine from 5-phospho-alpha-D-ribose 1-diphosphate: step 3/9. Its function is as follows. Catalyzes the hydrolysis of the adenine ring of phosphoribosyl-AMP. The sequence is that of Phosphoribosyl-AMP cyclohydrolase from Burkholderia multivorans (strain ATCC 17616 / 249).